The chain runs to 333 residues: Taste receptor type 2 member 38 (333 aa).

Topologically, residues 1–17 (MLTLTHICTVSYEVRST) are extracellular. Residues 18–38 (FLFISVLEFAVGFLTNAFISL) form a helical membrane-spanning segment. The Cytoplasmic portion of the chain corresponds to 39-55 (VNFWDVVKRQPLSNSDC). The helical transmembrane segment at 56–76 (VLLCLSISRLFLHGLLFLSAI) threads the bilayer. The Extracellular segment spans residues 77–94 (QLTHFQKLSEPLNHSYQV). Residues 95-115 (ILMLWMIANQANLWLAACLSL) traverse the membrane as a helical segment. The Cytoplasmic portion of the chain corresponds to 116-142 (LYCSKLIRFSHTFLICLASWVSRKISQ). The chain crosses the membrane as a helical span at residues 143–163 (MLLGIILCSCICTVLCVWCFF). Residues 164 to 190 (GRLHFTVTTVLFMNNNTRLNWQIKDLN) are Extracellular-facing. The N-linked (GlcNAc...) asparagine glycan is linked to asparagine 178. A helical membrane pass occupies residues 191–211 (LFYSFLFCYLWSVPPFLLFLV). The Cytoplasmic portion of the chain corresponds to 212–251 (SSGMLTVSLGRHMRTMKVYTRDSRDPSLEAHIKALKSLVS). Residues 252-272 (FFCFFVISSCAAFISVPLLIL) form a helical membrane-spanning segment. Over 273-276 (WHDK) the chain is Extracellular. A helical transmembrane segment spans residues 277–297 (IGVMVCVGIMAACPSGHAAVL). The Cytoplasmic portion of the chain corresponds to 298 to 333 (ISGNAKLRRAVTTILLWAQSSLKVRADHMADSRTLC).

The protein belongs to the G-protein coupled receptor T2R family.

Its subcellular location is the membrane. In terms of biological role, receptor that may play a role in the perception of bitterness and is gustducin-linked. May play a role in sensing the chemical composition of the gastrointestinal content. The activity of this receptor may stimulate alpha gustducin, mediate PLC-beta-2 activation and lead to the gating of TRPM5. This chain is Taste receptor type 2 member 38 (TAS2R38), found in Papio hamadryas (Hamadryas baboon).